The primary structure comprises 271 residues: Thiosulfate sulfurtransferase (271 aa).

Rhodanese domains are found at residues 21–129 (GAPE…ALDR) and 159–270 (GAAD…TPVE). Residue Cys-230 is the Cysteine persulfide intermediate of the active site.

It localises to the cytoplasm. It catalyses the reaction thiosulfate + hydrogen cyanide = thiocyanate + sulfite + 2 H(+). Functionally, catalyzes the sulfur transfer reaction from thiosulfate to cyanide, thus converting cyanide to the less toxic thiocyanate. Contributes to P.aeruginosa survival under cyanogenic conditions, and thus provides the bacterium with a defense mechanism against endogenous cyanide toxicity. Is the main cytoplasmic rhodanese in P.aeruginosa, accounting for 90% of total rhodanese activity. The chain is Thiosulfate sulfurtransferase from Pseudomonas aeruginosa (strain ATCC 15692 / DSM 22644 / CIP 104116 / JCM 14847 / LMG 12228 / 1C / PRS 101 / PAO1).